Here is a 6298-residue protein sequence, read N- to C-terminus: MSVTSEPGMISSFLLVYLSTLFISFVFGEAEIRFTGQTEFFVNETSTTVIRLVIERIGEPANVTAIVSLSGEDTGDFFDTYAAAFIPARGTNRTVYIAVCDDDLPEPDETFTFHLTLQKPSANVKLGWPRAASVTILSNDNAFGIISFSTPSSISVIEPRSRNASVPLTLIREKGTYGMVTVTFDVSGGPNPPEEDLNPVRGNITFPPGRATVIYNVTVLDDEVPENDELFLIQLRSVEGGAEINASRSSVEIIVKKNDSPVNFMQSVYVVPEDDHVLTIPVLRGKDSDGNLIGSDETQVSIRYKVMTWDSTAHAQQNVDFIDLQPDTTLVFPPFVHESHLKFQIIDDLIPEIAESFHIMLLKNTLQGDAVLMGPSTVQVTIKPNDKPYGVLSFNSILFERPVIIDEDTASSSRFEEIAVVRNGGTHGNVSVSWVLTRNSSDPSPVTADITPASGTLQFAQGQMLAPISLVVFDDDLPEEAEAYLLTILPHTIQGGAEVSEPAQLLFYIQDSDNVYGEIAFFPGESQKIESSPSERSLSLSLARRGGSKGDVRVIYSALYIPAGAMDPLRAKDGILNTSRRSSLLFPEQNQQVSIKLPIRNDAFLQNGAHFLVQLEAVVLVNIFPPIPPVSPRFGEIRNISLLVTPAIANGEIGFLSNLPIILHEPKDSSAEVVSIPLHRDGTDGQATVYWSLRPSGFNSKAVTLDDAGPFNGSVVFLSGQNETSINITVKGDDIPELNETVTLSLDRVSVDSDVLKSGYTSRDLIILENDDPGGIFEFSYDSRGPYVIKEGDAVELRITRSRGSLVKQFLRFHVEPRESNEFYGNMGVLEFTPGEREVVITLLTRLDGTPELDEHFWVILSSHGERESKLGRATLVNITILKNDYPHGIIEFVSDGLSASIKESKGEDIYHAVYGVIRTRGNFGAVNVSWMVSPDFTQDVFPVQGTVCFGDQEFFKNITVYSLVDEIPEEMEEFTIILLNATGGAQTGIRTTASLRILRNDDPVYFAEPCVLRVQEGETANFTVLRNGSVDGACTVQYATVDGKASGEEGDFAPVEKGETLVFEVGSREQSISVHVKDDGIPETDEPFYIVLFNSTGDTVVYEYGVATVIIEANDDPNGVFSLEPIDKAVEEGKTNAFWILRHRGHFGNVSVAWQLFQNASLQPGQEFYETSGTVNFTDGEETKPVILRAFPDRIPEFNEFYILRLVNISGPGGQLAETNFQVTVMIPFNDDPFGIFILDPECLEREVAEDVLSEDDMSYITSFTILRQQGVFGDVRVGWEVLSREFTAGLPPMIDFILLGSFPSTVPLQPHMRRHHSGTDVLYFSGLEGAFGTVDPKYQPFRNNTIANFTFSAWVMPNANTNGFLIAKDDSHGSIYYGVKIQTNETHVTLSLHYKTFGSNVTYIAKSTVMKYLEEGVWLHVLIILDDGIIEFYLDGKAMPRGIKSLKGEAITDGPGILRIGAGMDGGARFTGWMQDVRTYERKLTPEEIYELHAVPARTDLHPISGYLEFRQGESNKSFIVAARDDSEEEGEELFLLKLVSVDGGAQISKENTTARLRIQKSDNANGLFGFTGACIPEMTEEGSTVSCVVERTRGALGYVHVFYTISQIESEGINYLVDDFANASGTITFLPWQRSEVLNLYVLDEDMPELNEYFRVTLVSAVPGDGKLGSTPISGASIDPEKETTGITVKASDHPYGLMQFSTGLPPQPEDSMSLPASSVPHITVQEEDGEIRLLVIRAQGLLGRVTVGFRTVSLTAFSPEDYQSTAGTLEFQSGERYKYIFVNITDNSIPELEKSFKVELLNLDGGVSDLFRVDGSGSGEADTDFFLPPVLPHASLGVASQILVTIAASDHAHGVFEFSPESLFVSGTEPEDGYSTVVLNVTRTRGALSAVTLQWKVDSDLDGDLAITSGNITFETGQRIASITVEILSDEEPELDKALTVSILNVSSGSLGVLTNATLTILASDDPYGVFIFPNKTRPLSVEEATQNVALSIIRLKGLMGEVAVSYATIDDMEKPPYFPPNLARATQGGDYISASGLALFRVNQTEATITISILDDAEPERSESVFIELFNSSLVDKVQNRPIPHSPRLGPKVETVAHLVIVANDDAFGTVQLSATSVHVAENHVGPIINVTRTGGTFADVSVKFKAVPITAAAGEDYSIASSDVVLLEGETTKAVPIYIINDIYPELEETFLVQLLNETTGGATLGPLREAVITIEASDDPYGLFGFQNTKFIVEEPEFNSVRVNVPIIRNSGTLGNVTVQWVAIINGQFATGDLRVVSGNVTFAPGETIQTLLLEVLADDVPEIEEVVQVQLAAASGGGTIGLDRVANIVIPANDNPYGSVAFVQSVFRVQEPLERSSYANITVRRSGGHFGRLLLCYGTSDIDVVARAVEEGEDVLSYYESPTQGVPDPLWRTWVNVSAVEETQYTCATLCLKERACSAFSVVSGAEGPRCFWMTSWVSGTVNSSDFQTYKKNMTRVASLFSGQAVAGSDYEPVTRQWAVILEGDEFANLTVSVLPDDAPEMDESFLISLLEVHLMNISDSFKNQPTIGHPNTSAVVIGLNGDAFGVFIIYSVSPNTSEDGLCVEVQEQPQTSVELVIYRTGGSLGQVMVEWRVVGGTATEGLDFMGAGDILTFAEGETKKMAILTILDDSEPEDNESILVRLGATEGGSRILPSSDTVTVNILANDNVAGIVSFQTASRSVIGHEGEMLQFHVVRTPPGRGNVTVNWKVVGQNLEVNFANFTGQLFFSEGTLNKTIFVHLLDDNIPEEKEVYQVVLYDVKTQGVSPAGVALLDAQGYAAVLTVEASDEPHGVLNFALSSRFVVLQEANVTIQLFVNREFGSLGAINVTYATVPGIVSLKNNTEGNLAEPESDFIPVVGSLVLEEGETTAAISITVLEDDIPELKEYFLVNLTHVDLIMAPLTSSPPRLDSEGLTAQIVIDANDGAQGMIEWQRNRFEVNETDGVVTLVAQRSRAALGQVSLFMYAQNLEAQAGLDYMRTPQILHFTDGERFKHVDVMILDDDMPEGDERFQLLLTNPSPGLELGKNTIALITVLANDDGPGVLSFNNSGHIFLREPTSLYVQESVAVLVIVREPAQGLFGTVAVQFVVTEVNSSTESKDLSPSKGFIVLEEGVRSKTLRISAILDTEPEMDEHFVCTLFNPTGGARLGAHVQTLITIFQNQAPLGLFSISAVENSATSIDVEESNRSVYLNVSRTNGLDLTASVQWETVSETAFGMRGMDVVFSIFQSFFDKTALDWCFFTVEGSVYGVMLRKSSLVVYRWQGTFVPVEDLKVESPKTCEAFNIGVSPYLVITHGERSGEKPSINSVYMLTAGFRLVLIQTIIISGSCQVRHFTSDSQDYFIIASRRNDSELTQVFRWNGNNFAWHQTLPVRGVLGMALFSRGGSVFLAISQANIRQTSLLFTWSGTQFINFQELPISGITQVEALSSGDDVYLCFAKNTFLGNQNAIDIFVWEMGHSSLRYFQSLDFAAVKRIRSFTPASGIVHILLTAQDGSALYCWNSELNAFSFVLEAPAAHDAAFVTVKSLNSSKTLIALVGATDSHLYELTYVSSQSDFIPSLGELIFEPGDKEAIIAVNVLDDTVPEKEESFRVQLKSPRGGAEIGINSSVRVTVLANDGAYGVVAFAQNSLHKQLEELERDSLVTLNVERLRGTHGRITVAWEAAGSVSDVFPTSGVISFTEDQAMSMITLTVLADDLPELSEAVVVTLTQIVTEGVEDPLKGATIDQSRSRSVLTILPSDSPYGAVRWHTESLFNRVPEPTENITVVQLHIVRDKGLFGDISIHLIAKPNFLLHINNQATEDEDFVLQDSVIIMKENIKETHAEVAILPDEVPELDEGLIVTIAAVNLVNPNFPAEQPRVQRPRMESAEILIEENDDPRGIFNFHVVRDVGGVIIAHEGPPPLNVLQVPVVRMAGTFETVNVYWKATPDSAGLEDFQPSHGMLQFADGQVIAPILVTIIDDSEFELLETFTISLVSVTGGGRLGDDVSVNVVIAPNDSPFGIFGFEKKTVMVDGPLLSDDPDSYVTLTVVRSPGGKGAVRLHWAIEEKAKDDLSPLNGTLYFDETESQKSVILHTLKDGMVGEDRRFIIELTAADEVEISPVKGSASVIIRGDKSISEVGIASSSRHIIIGEPSATYNGTAIIDLVRGPGVSGEITVNWKILPPSRGEFVETSGQLTMLDGQTAATVVIQVLNDDIPEEKCHYEFQLTEISEGRMLHEASVSARITMVASDAPYGRFSFSHEQLHVSKAAQRVNVTVVRSGGSFGRARVLYETGSRTAEAGWDFVPASGELLFEAREKMKSLYIDILDDDLPEGPEEFVLAITRVDLQGRGYDFTIQENGLQIDQPPEIGNISIVRIIIMKNDNAEGIIEFDPKYTDISVEEDAGVITLPVLRLHGTYGHVSADFSSRGFSAVPGGYVLRGSSVTFQHGQNLSFINVSIIDDNGSEFEKQFEILLIGATGGAILGRHLVSKITIAKSDSPFGIIRFLNQSKISLPNPSSTMALHLVLERTGGLLGEIQVSWEVVGPDAEEPLPPHNGDFADPVSGTVSFGDGEGGVRSIILRVCPHEETEAEETFIVQLKPLREAKLDPRAKAVTLTIQKFGDPNGVIHFAPESLSKRRFSEPPPSDGPLLVSFLVTRSKGTSGDIKVHWELSSEFDITRDFLSTRGFFTIADGESDANFDVHLLPDDVPEIEEEYAVQLVSVEGGAELDLGKCTARFSVSANDDPHGVFALYSDRQSVLIGQNLDRSIQINITRLAGAFGAVAVRVQILSDNKEDPVATENEERQLVITDGARYKVGLVPLKNQVFLSLGSNFTLQLVSVRLLSGPFYGIPTILQEAKNAILSVPEEAANSQVGFESAAFQLMDIKAGTSQVMVSRKGTYGRLSVAWTTGYAPGSEIPEPIVIGNMTPTLGSLSFVHGEERKGVLLWTFPSPGRPEAFVLHLSGLRSSAAGGAQLRSGFTTAEIEPMGVFQFSPSSRNITVSEDAQTIRICVQRLFGFHGDLIKVSYETTAGSAKPPEDFEAVQKGEVFFQRFQPEIDFEITIINDQLPEIEETYYINLTSVETRGLGKGGVNWRPRLNPDLSVAVVTIVDNDDLTGAAVSVPVTAGTVAVDSTLLAMETGSTTHPNKSKITTIPYTTEVFAPVTETVTVSAIPEKLATAHSVISVKPDVVPGTVVASVYGTLSIGPPIVYVSEEMKNGTLSTADILIQRMGGFAGNVTITVKTFGGRCAQKEPSVWPFQDVYGVGNLTTWAVEEEDFEEQLLTLTFLYGERERKIAVQILDDDDAEGQEFFYVFLTDPQGGAEIVRGKDSTGFSAFAVIIISGSDLHNGIIGFSEESQRGLELREGADKNSQRLVVTRQPNRAFEEVQIFWRVTLNQTVTILQEKGANLTDELRFVAGVTTCTGGQTRCFIHLELNPKKVHQVEMPFFVELYDVTAGAAINNSARFAPIKLSKSGAPQSLVSFSVGSRLAVAHKKSTLISLQVARDSGTGIMMSVNFITQELRSAETVGRVLISPAVSGKDFVRTEGTLVFEPGQKSAVLDVVLTPEAGSLNKFPKRFQIVLFDPKGGARIDKVYGTANITLISDADSQAVWGLEDLLHRPLHEDILNRVLHNLNLRVATESTDEQLSAVMLIMEKITMEGRNQAFSIKSRTLLYELLCVLINPKRKDTRGFSHFVEVAEHFAFSLLTDVTCGSPGEKSKTILDSCPYLSILALHWNPQQINGHKFEGKEGDYIQIPERLLDVPEAEMLDGKNACTLVQFVEYSSQQWFIAGDNLPALKDKVLSLNVKGQSAQPLPNNNEVLYRIHAAEPRVVPHTSRCLLWNQAAASWLSDSQFCKVVEDASDYVECACSHMSVYAVYAQTDNSSSYNEAFFSAGLICISGLCLAVVSHMFCARHSMFAAKLLTHMMVASLGTQILFLASAYASPHLSEESCSAVAAVAHYLYLCQFSWMLIQSVNFWYVLVVSDEHTERRCLLFCLLSWGLPSFVVILLILILRGIYHRSMPQIYGLIHGDLCFIPNIYAALFTAALVPLMCLVVVFVVFIHAYQLKPQWKGYDDVFRGRTNAAEIPLILYLFALISMTWLWGGLHMAYGHFWMLVLFVIFNSLQGLYVFVVYFILHNQTCCPMKASYTVEMNGHPGPSTAFFTPGSGIPPAGEINKSTQNLINAMEEVPSDWERSSFQQTSQASPDLKTSPQNGASFPSSGGYGPGSLIADEESQEFDDLIFALKTGAGLSVSDNESGQGSQEGGTLTDSQIVELRRIPIADTHL.

The first 28 residues, 1-28, serve as a signal peptide directing secretion; the sequence is MSVTSEPGMISSFLLVYLSTLFISFVFG. Calx-beta domains follow at residues 29 to 116, 132 to 236, 251 to 362, 389 to 489, 646 to 746, 764 to 862, 877 to 980, 994 to 1094, 1108 to 1208, 1440 to 1540, 1562 to 1662, 1706 to 1805, 1846 to 1948, 1962 to 2075, 2103 to 2202, 2218 to 2320, 2437 to 2537, 2576 to 2672, 2687 to 2786, 2810 to 2921, 2945 to 3044, and 3067 to 3167; these read EAEI…FHLT, ASVT…IQLR, VEII…IMLL, YGVL…LTIL, PAIA…TLSL, DLII…VILS, VNIT…IILL, ASLR…IVLF, ATVI…LRLV, AMPR…FLLK, QKSD…VTLV, TGLP…VELL, ILVT…VSIL, TLTI…IELF, HLVI…VQLL, VITI…VQLA, TLCL…FLIS, FIIY…VRLG, VTVN…VVLY, LTVE…VNLT, QIVI…LLLT, and DGPG…VCTL. Residues 29–5901 are Extracellular-facing; it reads EAEIRFTGQT…TDNSSSYNEA (5873 aa). 6 EAR repeats span residues 3251–3292, 3293–3341, 3344–3389, 3391–3435, 3437–3484, and 3488–3530; these read VFSI…RWQG, TFVP…MLTA, RLVL…RWNG, NFAW…TWSG, QFIN…VWEM, and SLRY…CWNS. 13 Calx-beta domains span residues 3581 to 3622, 3636 to 3736, 3772 to 3872, 3919 to 4003, 4017 to 4120, 4135 to 4235, 4251 to 4351, 4384 to 4484, 4507 to 4607, 4628 to 4728, 4989 to 5089, 5281 to 5325, and 5361 to 5461; these read QSDF…RVQL, SVRV…VVTL, GAVR…VTIA, GGVI…ISLV, VNVV…IELT, SVII…EFQL, ARIT…LAIT, RIII…ILLI, SPFG…IVQL, KFGD…AVQL, TTAE…INLT, AVEE…YVFL, and IGFS…FVEL. One can recognise a GAIN-B domain in the interval 5740–5896; the sequence is SILALHWNPQ…AVYAQTDNSS (157 aa). 2 disulfides stabilise this stretch: Cys-5849/Cys-5878 and Cys-5866/Cys-5880. The interval 5849–5896 is GPS; it reads CLLWNQAAASWLSDSQFCKVVEDASDYVECACSHMSVYAVYAQTDNSS. A helical transmembrane segment spans residues 5902–5922; it reads FFSAGLICISGLCLAVVSHMF. At 5923–5932 the chain is on the cytoplasmic side; sequence CARHSMFAAK. The chain crosses the membrane as a helical span at residues 5933 to 5953; that stretch reads LLTHMMVASLGTQILFLASAY. Residues 5954 to 5973 are Extracellular-facing; sequence ASPHLSEESCSAVAAVAHYL. The chain crosses the membrane as a helical span at residues 5974–5994; sequence YLCQFSWMLIQSVNFWYVLVV. Residues 5995-6003 are Cytoplasmic-facing; sequence SDEHTERRC. The helical transmembrane segment at 6004–6024 threads the bilayer; that stretch reads LLFCLLSWGLPSFVVILLILI. Topologically, residues 6025 to 6052 are extracellular; sequence LRGIYHRSMPQIYGLIHGDLCFIPNIYA. Residues 6053 to 6073 traverse the membrane as a helical segment; the sequence is ALFTAALVPLMCLVVVFVVFI. Over 6074–6097 the chain is Cytoplasmic; sequence HAYQLKPQWKGYDDVFRGRTNAAE. A helical transmembrane segment spans residues 6098–6118; it reads IPLILYLFALISMTWLWGGLH. The Extracellular portion of the chain corresponds to 6119-6126; the sequence is MAYGHFWM. The chain crosses the membrane as a helical span at residues 6127 to 6147; the sequence is LVLFVIFNSLQGLYVFVVYFI. The Cytoplasmic segment spans residues 6148–6298; it reads LHNQTCCPMK…RRIPIADTHL (151 aa). Disordered regions lie at residues 6206-6242 and 6264-6283; these read ERSSFQQTSQASPDLKTSPQNGASFPSSGGYGPGSLI and SVSDNESGQGSQEGGTLTDS. 2 stretches are compositionally biased toward polar residues: residues 6208–6226 and 6265–6283; these read SSFQQTSQASPDLKTSPQN and VSDNESGQGSQEGGTLTDS.

This sequence belongs to the G-protein coupled receptor 2 family. Adhesion G-protein coupled receptor (ADGR) subfamily. As to quaternary structure, forms a heterodimer, consisting of a large extracellular region (alpha subunit) non-covalently linked to a seven-transmembrane moiety (beta subunit). Interacts (via the cytoplasmic region) with PDZD7. Component of USH2 complex, composed of ADGRV1, PDZD7, USH2A and WHRN. Interacts with USH2A and WHRN. Interacts (via the cytoplasmic region) with MYO7A (via MyTH4-FERM domains). Autoproteolytically cleaved into 2 subunits, an extracellular alpha subunit and a seven-transmembrane subunit. As to expression, expressed by oligodendrocytes. In midbrain, enriched in the myelinated regions of the superior and inferior colliculi. In the cochlea, expressed in developing hair cells. Expressed by photoreceptors in the retina.

The protein resides in the cell membrane. It localises to the cell projection. It is found in the stereocilium membrane. Its subcellular location is the photoreceptor inner segment. The protein localises to the secreted. G-protein coupled receptor which has an essential role in the development of hearing and vision. Couples to G-alpha(i)-proteins, GNAI1/2/3, G-alpha(q)-proteins, GNAQ, as well as G-alpha(s)-proteins, GNAS, inhibiting adenylate cyclase (AC) activity and cAMP production. Required for the hair bundle ankle formation, which connects growing stereocilia in developing cochlear hair cells of the inner ear. In response to extracellular calcium, activates kinases PKA and PKC to regulate myelination by inhibiting the ubiquitination of MAG, thus enhancing the stability of this protein in myelin-forming cells of the auditory pathway. In retina photoreceptors, the USH2 complex is required for the maintenance of periciliary membrane complex that seems to play a role in regulating intracellular protein transport. Involved in the regulation of bone metabolism. In terms of biological role, cleaved ADGRV1 beta-subunit couples with G-alpha(i)-proteins, GNAI1/2/3, and constitutively inhibits adenylate cyclase (AC) activity with a stronger effect than full ADGRV1. This chain is Adhesion G-protein coupled receptor V1, found in Mus musculus (Mouse).